Reading from the N-terminus, the 300-residue chain is Peptidyl-prolyl cis-trans isomerase E (300 aa).

An RRM domain is found at 6-84 (RTIYVGGLAD…RTIRVNLAKP (79 aa)). A PPIase cyclophilin-type domain is found at 142 to 298 (FFDIRIGGND…QKIVIYSCGE (157 aa)).

The protein belongs to the cyclophilin-type PPIase family. PPIase E subfamily.

It is found in the nucleus. The enzyme catalyses [protein]-peptidylproline (omega=180) = [protein]-peptidylproline (omega=0). Functionally, PPIases accelerate the folding of proteins. It catalyzes the cis-trans isomerization of proline imidic peptide bonds in oligopeptides. Combines RNA-binding and PPIase activities. The polypeptide is Peptidyl-prolyl cis-trans isomerase E (cyp33) (Drosophila melanogaster (Fruit fly)).